A 265-amino-acid chain; its full sequence is Mlc titration factor A (265 aa).

Zn(2+) contacts are provided by His-111, His-148, His-152, and Glu-211.

The protein belongs to the MtfA family. In terms of assembly, interacts with Mlc with high affinity. Zn(2+) serves as cofactor.

The protein localises to the cytoplasm. Its activity is regulated as follows. Proteolytic activity is stimulated by interaction with Mlc. Addition of the chelators EDTA or phenanthroline significantly reduces the peptidase activity, whereas the addition of other protease inhibitors has much less effect. Functionally, involved in the modulation of the activity of the glucose-phosphotransferase system (glucose-PTS). Interacts with the transcriptional repressor Mlc, preventing its interaction with DNA and leading to the modulation of expression of genes regulated by Mlc, including ptsG, which encodes the PTS system glucose-specific EIICB component. Its function is as follows. Shows zinc-dependent metallopeptidase activity. In vitro, can cleave several artificial substrates. The greatest activity and specificity is observed for L-alanine fused to 4-nitroanilide (L-alanine-pNA). Shows significantly lower activity towards L-arginine-pNA, L-proline-pNA, hippuryl-L-phenylalanine and hippuryl-L-arginine, and cannot use FTC-casein. Mlc does not appear to be a biologically relevant peptidase substrate. Biologically relevant targets may have a function in growth transition under changing environmental conditions. In Escherichia coli (strain K12), this protein is Mlc titration factor A.